A 359-amino-acid chain; its full sequence is Olfactory receptor 8S1 (359 aa).

Residues 1 to 25 are Extracellular-facing; that stretch reads MALGNHSTITEFLLLGLSADPNIRA. Asn5 is a glycosylation site (N-linked (GlcNAc...) asparagine). Residues 26 to 46 traverse the membrane as a helical segment; sequence LLFVLFLGIYLLTIMENLMLL. Residues 47–54 lie on the Cytoplasmic side of the membrane; sequence LMIRADSC. A helical membrane pass occupies residues 55–75; the sequence is LHKPMYFFLSHLSFVDLCFSS. The Extracellular segment spans residues 76-99; it reads VIVPKMLENLLSQRKTISVEGCLA. Cys97 and Cys189 are disulfide-bonded. Residues 100 to 120 form a helical membrane-spanning segment; it reads QVFFVFVTAGTEACLLSGMAY. The Cytoplasmic segment spans residues 121-139; it reads DRHAAICRPLLYGQIMGKQ. Residues 140–160 traverse the membrane as a helical segment; the sequence is LYMHLVWGSWGLGFLDALINV. Over 161-197 the chain is Extracellular; that stretch reads LLAVNMVFCEAKIIHHYSYEMPSLLPLSCSDISRSLI. A helical transmembrane segment spans residues 198–217; the sequence is ALLCSTLLHGLGNFLLVFLS. Over 218 to 237 the chain is Cytoplasmic; it reads YTRIISTILSISSTSGRSKA. A helical transmembrane segment spans residues 238-258; it reads FSTCSAHLTAVTLYYGSGLLR. The Extracellular portion of the chain corresponds to 259–269; it reads HLMPNSGSPIE. A helical transmembrane segment spans residues 270 to 290; the sequence is LIFSVQYTVVTPMLNSLIYSL. The Cytoplasmic portion of the chain corresponds to 291–359; the sequence is KNKEVKGERS…ALRAAPTALP (69 aa). The segment at 301-338 is disordered; the sequence is LRDSSHLPQLHKGQARWKRPAFTEGRREPGHPELSIPV.

It belongs to the G-protein coupled receptor 1 family.

The protein resides in the cell membrane. Its function is as follows. Odorant receptor. This is Olfactory receptor 8S1 (OR8S1) from Homo sapiens (Human).